A 142-amino-acid chain; its full sequence is MYPKQFSLYNYSLETMSKDENVESKETIRVDKRVREDEEEEEEKKIDTFFKLIKHYQEARKRRREELAENSGVVRRKSNGGERSGIVVPAFQPEDFSQCRTGLKPPLMFVSDHKEENTKVEQEEDQTEERNEDKALDLNLAL.

The tract at residues 47–53 (DTFFKLI) is involved in NPR1/NIM1 interaction. The Nuclear localization signal motif lies at 60 to 64 (RKRRR). Disordered regions lie at residues 63-86 (RREELAENSGVVRRKSNGGERSGI) and 108-142 (MFVSDHKEENTKVEQEEDQTEERNEDKALDLNLAL). A coiled-coil region spans residues 110-141 (VSDHKEENTKVEQEEDQTEERNEDKALDLNLA). A compositionally biased stretch (basic and acidic residues) spans 111–121 (SDHKEENTKVE).

Belongs to the NPR1-interactor family. As to quaternary structure, interacts with NPR1 C-terminal region.

It localises to the nucleus. The sequence is that of Protein NIM1-INTERACTING 1 from Arabidopsis thaliana (Mouse-ear cress).